Reading from the N-terminus, the 259-residue chain is Nodulation protein J (259 aa).

The ABC transmembrane type-2 domain occupies 30-256 (ASILGNLADP…LVSTALLRRR (227 aa)). 6 consecutive transmembrane segments (helical) span residues 32–52 (ILGNLADPVIYLFGLGAGLGV), 64–84 (AFLAAGMIATSAMTAATFETI), 116–136 (AWAATKASLAGTGIGIVAAML), 141–161 (WLALLYALPVIAITGLAFASL), 174–194 (YFIFYQTLVITPMLFLSGAVF), and 228–248 (IANVCLHIGVLCIYIVVPFLV).

It belongs to the ABC-2 integral membrane protein family. Lipooligosaccharide exporter (TC 3.A.1.102) subfamily. In terms of assembly, the complex is composed of two ATP-binding proteins (NodI) and two transmembrane proteins (NodJ).

The protein resides in the cell inner membrane. In terms of biological role, part of the ABC transporter complex NodIJ involved in the export of the nodulation factors (Nod factors), the bacterial signal molecules that induce symbiosis and subsequent nodulation induction. Nod factors are LCO (lipo-chitin oligosaccharide), a modified beta-1,4-linked N-acetylglucosamine oligosaccharide. This subunit encodes the transporter. The chain is Nodulation protein J (nodJ) from Rhizobium leguminosarum bv. viciae.